The sequence spans 322 residues: Methionyl-tRNA formyltransferase (322 aa).

113-116 (SLLP) contacts (6S)-5,6,7,8-tetrahydrofolate.

This sequence belongs to the Fmt family.

The catalysed reaction is L-methionyl-tRNA(fMet) + (6R)-10-formyltetrahydrofolate = N-formyl-L-methionyl-tRNA(fMet) + (6S)-5,6,7,8-tetrahydrofolate + H(+). In terms of biological role, attaches a formyl group to the free amino group of methionyl-tRNA(fMet). The formyl group appears to play a dual role in the initiator identity of N-formylmethionyl-tRNA by promoting its recognition by IF2 and preventing the misappropriation of this tRNA by the elongation apparatus. The protein is Methionyl-tRNA formyltransferase of Bacteroides thetaiotaomicron (strain ATCC 29148 / DSM 2079 / JCM 5827 / CCUG 10774 / NCTC 10582 / VPI-5482 / E50).